A 142-amino-acid polypeptide reads, in one-letter code: Hemoglobin subunit alpha-2 (142 aa).

The 141-residue stretch at 2–142 folds into the Globin domain; the sequence is VLSPADKTNV…VSTVLTSKYR (141 aa). Histidine 59 contacts O2. Heme b is bound at residue histidine 88.

Belongs to the globin family. In terms of assembly, heterotetramer of two alpha chains and two beta chains. As to expression, red blood cells.

Its function is as follows. Involved in oxygen transport from the lung to the various peripheral tissues. This chain is Hemoglobin subunit alpha-2, found in Arctocephalus galapagoensis (Galapagoes fur seal).